The primary structure comprises 125 residues: Small ribosomal subunit protein uS12 (125 aa).

Aspartate 89 bears the 3-methylthioaspartic acid mark.

The protein belongs to the universal ribosomal protein uS12 family. Part of the 30S ribosomal subunit. Contacts proteins S8 and S17. May interact with IF1 in the 30S initiation complex.

In terms of biological role, with S4 and S5 plays an important role in translational accuracy. Interacts with and stabilizes bases of the 16S rRNA that are involved in tRNA selection in the A site and with the mRNA backbone. Located at the interface of the 30S and 50S subunits, it traverses the body of the 30S subunit contacting proteins on the other side and probably holding the rRNA structure together. The combined cluster of proteins S8, S12 and S17 appears to hold together the shoulder and platform of the 30S subunit. This chain is Small ribosomal subunit protein uS12, found in Clostridium kluyveri (strain ATCC 8527 / DSM 555 / NBRC 12016 / NCIMB 10680 / K1).